Reading from the N-terminus, the 403-residue chain is Anti-sigma-I factor RsgI8 (403 aa).

Residues 1–59 (MTKQKGTILKLKNNLAIIMTSDCKIVSIKRQPGMYEGLEISFNKNEIINKKNKLAFYSR) are Cytoplasmic-facing. In terms of domain architecture, RsgI N-terminal anti-sigma spans 4–51 (QKGTILKLKNNLAIIMTSDCKIVSIKRQPGMYEGLEISFNKNEIINKK). A helical transmembrane segment spans residues 60–80 (IAAGIAAIFIIMVISFNLFNN). Topologically, residues 81 to 403 (NDVYAYVAID…KAKNSIEKMP (323 aa)) are extracellular. Composition is skewed to basic and acidic residues over residues 254-314 (VHNV…EPAK), 324-335 (LPKDKTIPEEKT), and 349-403 (VEPK…EKMP). Positions 254-403 (VHNVKKEEPK…KAKNSIEKMP (150 aa)) are disordered.

As to quaternary structure, interacts (via RsgI N-terminal anti-sigma domain) with SigI8.

Its subcellular location is the cell membrane. Functionally, anti-sigma factor for SigI8. Negatively regulates SigI8 activity through direct interaction. The chain is Anti-sigma-I factor RsgI8 from Acetivibrio thermocellus (strain ATCC 27405 / DSM 1237 / JCM 9322 / NBRC 103400 / NCIMB 10682 / NRRL B-4536 / VPI 7372) (Clostridium thermocellum).